The sequence spans 54 residues: Large ribosomal subunit protein bL33 (54 aa).

Belongs to the bacterial ribosomal protein bL33 family.

In Parafrankia sp. (strain EAN1pec), this protein is Large ribosomal subunit protein bL33.